Reading from the N-terminus, the 320-residue chain is Ribonuclease Z (320 aa).

The Zn(2+) site is built by His63, His65, Asp67, His68, His141, Asp212, and His270. Asp67 acts as the Proton acceptor in catalysis.

The protein belongs to the RNase Z family. As to quaternary structure, homodimer. Requires Zn(2+) as cofactor.

The enzyme catalyses Endonucleolytic cleavage of RNA, removing extra 3' nucleotides from tRNA precursor, generating 3' termini of tRNAs. A 3'-hydroxy group is left at the tRNA terminus and a 5'-phosphoryl group is left at the trailer molecule.. Zinc phosphodiesterase, which displays some tRNA 3'-processing endonuclease activity. Probably involved in tRNA maturation, by removing a 3'-trailer from precursor tRNA. The polypeptide is Ribonuclease Z (Lacticaseibacillus casei (strain BL23) (Lactobacillus casei)).